We begin with the raw amino-acid sequence, 271 residues long: Formamidopyrimidine-DNA glycosylase (271 aa).

Residue P2 is the Schiff-base intermediate with DNA of the active site. E3 serves as the catalytic Proton donor. Catalysis depends on K58, which acts as the Proton donor; for beta-elimination activity. DNA contacts are provided by H91, R110, and R152. The segment at S237–H271 adopts an FPG-type zinc-finger fold. The active-site Proton donor; for delta-elimination activity is the R261.

Belongs to the FPG family. As to quaternary structure, monomer. Requires Zn(2+) as cofactor.

The catalysed reaction is Hydrolysis of DNA containing ring-opened 7-methylguanine residues, releasing 2,6-diamino-4-hydroxy-5-(N-methyl)formamidopyrimidine.. It carries out the reaction 2'-deoxyribonucleotide-(2'-deoxyribose 5'-phosphate)-2'-deoxyribonucleotide-DNA = a 3'-end 2'-deoxyribonucleotide-(2,3-dehydro-2,3-deoxyribose 5'-phosphate)-DNA + a 5'-end 5'-phospho-2'-deoxyribonucleoside-DNA + H(+). In terms of biological role, involved in base excision repair of DNA damaged by oxidation or by mutagenic agents. Acts as a DNA glycosylase that recognizes and removes damaged bases. Has a preference for oxidized purines, such as 7,8-dihydro-8-oxoguanine (8-oxoG). Has AP (apurinic/apyrimidinic) lyase activity and introduces nicks in the DNA strand. Cleaves the DNA backbone by beta-delta elimination to generate a single-strand break at the site of the removed base with both 3'- and 5'-phosphates. This Geotalea uraniireducens (strain Rf4) (Geobacter uraniireducens) protein is Formamidopyrimidine-DNA glycosylase.